We begin with the raw amino-acid sequence, 324 residues long: 4-diphosphocytidyl-2-C-methyl-D-erythritol kinase (324 aa).

The active site involves Lys11. 108-118 (PIGAGLAGGST) serves as a coordination point for ATP. Asp150 is an active-site residue.

It belongs to the GHMP kinase family. IspE subfamily.

The catalysed reaction is 4-CDP-2-C-methyl-D-erythritol + ATP = 4-CDP-2-C-methyl-D-erythritol 2-phosphate + ADP + H(+). It participates in isoprenoid biosynthesis; isopentenyl diphosphate biosynthesis via DXP pathway; isopentenyl diphosphate from 1-deoxy-D-xylulose 5-phosphate: step 3/6. Its function is as follows. Catalyzes the phosphorylation of the position 2 hydroxy group of 4-diphosphocytidyl-2C-methyl-D-erythritol. The protein is 4-diphosphocytidyl-2-C-methyl-D-erythritol kinase of Cyanothece sp. (strain PCC 7425 / ATCC 29141).